Here is a 107-residue protein sequence, read N- to C-terminus: Iron-sulfur cluster assembly protein CyaY (107 aa).

Belongs to the frataxin family.

Involved in iron-sulfur (Fe-S) cluster assembly. May act as a regulator of Fe-S biogenesis. The sequence is that of Iron-sulfur cluster assembly protein CyaY from Yersinia intermedia.